We begin with the raw amino-acid sequence, 159 residues long: Probable histone H2A.5 (159 aa).

Gly residues predominate over residues 1–10 (MDAAGAGAGG). Disordered stretches follow at residues 1 to 29 (MDAA…KKAV) and 136 to 159 (EKAA…PKKA). Basic residues-rich tracts occupy residues 11 to 29 (KLKK…KKAV) and 148 to 159 (PKKAAGKSPKKA). Short sequence motifs (SPKK motif) lie at residues 147–150 (SPKK) and 155–158 (SPKK).

The protein belongs to the histone H2A family. As to quaternary structure, the nucleosome is a histone octamer containing two molecules each of H2A, H2B, H3 and H4 assembled in one H3-H4 heterotetramer and two H2A-H2B heterodimers. The octamer wraps approximately 147 bp of DNA.

Its subcellular location is the nucleus. It is found in the chromosome. Its function is as follows. Core component of nucleosome. Nucleosomes wrap and compact DNA into chromatin, limiting DNA accessibility to the cellular machineries which require DNA as a template. Histones thereby play a central role in transcription regulation, DNA repair, DNA replication and chromosomal stability. DNA accessibility is regulated via a complex set of post-translational modifications of histones, also called histone code, and nucleosome remodeling. The protein is Probable histone H2A.5 of Oryza sativa subsp. indica (Rice).